Here is a 389-residue protein sequence, read N- to C-terminus: Arrestin-C (389 aa).

Residues 369–389 (AQQEPSGESQEALAAEGNEGS) form a disordered region.

Belongs to the arrestin family. Homodimer; disulfide-linked in response to retinal illumination. Interacts with CXCR4; the interaction is dependent on the C-terminal phosphorylation of CXCR4 and modulates the calcium ion mobilization activity of CXCR4. Interacts with GPR84. In terms of tissue distribution, expressed in cone photoreceptors in the retina (at protein level).

Its subcellular location is the photoreceptor inner segment. The protein localises to the cell projection. It localises to the cilium. The protein resides in the photoreceptor outer segment. In terms of biological role, may play a role in an as yet undefined retina-specific signal transduction. Could bind to photoactivated-phosphorylated red/green opsins. This is Arrestin-C (ARR3) from Bos taurus (Bovine).